The chain runs to 177 residues: Inorganic pyrophosphatase (177 aa).

Residues Lys31, Arg45, and Tyr57 each coordinate substrate. Mg(2+) contacts are provided by Asp67, Asp72, and Asp104. Tyr142 provides a ligand contact to substrate.

It belongs to the PPase family. As to quaternary structure, homohexamer. The cofactor is Mg(2+).

It is found in the cytoplasm. It carries out the reaction diphosphate + H2O = 2 phosphate + H(+). In terms of biological role, catalyzes the hydrolysis of inorganic pyrophosphate (PPi) forming two phosphate ions. The protein is Inorganic pyrophosphatase of Neisseria meningitidis serogroup A / serotype 4A (strain DSM 15465 / Z2491).